The sequence spans 189 residues: MAKEGLALEITELRLGLPGDNYSEISVCGSSKKKKRVLSDMMTSSALDTENENSVVSSVEDESLPVVKSQAVGWPPVCSYRRKKNNEEASKAIGYVKVSMDGVPYMRKIDLGSSNSYINLVTVLENLFGCLGIGVAKEGKKCEYIIIYEDKDRDWMLVGDVPWQMFKESCKRLRIVKRSDATGFGLQQD.

Residues 13–17 carry the EAR-like (transcriptional repression) motif; that stretch reads LRLGL. The PB1 domain occupies 93–178; that stretch reads IGYVKVSMDG…SCKRLRIVKR (86 aa).

The protein belongs to the Aux/IAA family. Homodimers and heterodimers. Interacts with TPL. As to expression, highly expressed in stems and flowers.

Its subcellular location is the nucleus. Functionally, aux/IAA proteins are short-lived transcriptional factors that function as repressors of early auxin response genes at low auxin concentrations. Repression is thought to result from the interaction with auxin response factors (ARFs), proteins that bind to the auxin-responsive promoter element (AuxRE). Formation of heterodimers with ARF proteins may alter their ability to modulate early auxin response genes expression. In Arabidopsis thaliana (Mouse-ear cress), this protein is Auxin-responsive protein IAA6 (IAA6).